Reading from the N-terminus, the 457-residue chain is Chromosomal replication initiator protein DnaA (457 aa).

The tract at residues 1-75 (MDAQLNNLWE…ALKIVTSRKF (75 aa)) is domain I, interacts with DnaA modulators. The interval 75–118 (FKIEFYLESDLEEEKENEEKQKEEKKDNTNDVDGSIVVSDEMSA) is domain II. A disordered region spans residues 87–108 (EEKENEEKQKEEKKDNTNDVDG). A compositionally biased stretch (basic and acidic residues) spans 91–103 (NEEKQKEEKKDNT). The interval 119–335 (TLNPKYTFQS…GALIRIIAYS (217 aa)) is domain III, AAA+ region. G163, G165, K166, and T167 together coordinate ATP. A domain IV, binds dsDNA region spans residues 336 to 457 (SLTNRDVSVD…NDITKKLTQK (122 aa)).

This sequence belongs to the DnaA family. Oligomerizes as a right-handed, spiral filament on DNA at oriC.

It localises to the cytoplasm. In terms of biological role, plays an essential role in the initiation and regulation of chromosomal replication. ATP-DnaA binds to the origin of replication (oriC) to initiate formation of the DNA replication initiation complex once per cell cycle. Binds the DnaA box (a 9 base pair repeat at the origin) and separates the double-stranded (ds)DNA. Forms a right-handed helical filament on oriC DNA; dsDNA binds to the exterior of the filament while single-stranded (ss)DNA is stabiized in the filament's interior. The ATP-DnaA-oriC complex binds and stabilizes one strand of the AT-rich DNA unwinding element (DUE), permitting loading of DNA polymerase. After initiation quickly degrades to an ADP-DnaA complex that is not apt for DNA replication. Binds acidic phospholipids. In Clostridium perfringens (strain SM101 / Type A), this protein is Chromosomal replication initiator protein DnaA.